The following is a 55-amino-acid chain: Accessory gland-specific peptide 70A (55 aa).

The N-terminal stretch at Met1–Ser19 is a signal peptide. Pro28, Pro32, Pro34, and Pro38 each carry hydroxyproline. Cys43 and Cys55 are disulfide-bonded.

As to expression, main cells of the accessory glands of males (paragonial gland).

It localises to the secreted. Its function is as follows. Represses female sexual receptivity and stimulates oviposition. The chain is Accessory gland-specific peptide 70A (Acp70A) from Drosophila mauritiana (Fruit fly).